The following is an 820-amino-acid chain: TORTIFOLIA1-like protein 2 (820 aa).

HEAT repeat units lie at residues 61-98 (DKVS…FHEG), 102-139 (PYLG…KMSC), 146-183 (GVFV…SSPE), 187-224 (AIIQ…AGGA), and 228-265 (SVLS…TGEK). Residues 304-321 (PGSDSPEPSETESSVKES) show a composition bias toward low complexity. Disordered regions lie at residues 304-325 (PGSD…YNGA), 357-377 (PVSA…SNQD), and 584-644 (GSTI…GKTG). Basic and acidic residues predominate over residues 367 to 377 (YNDDPRKSNQD). Over residues 584–613 (GSTISPRLSSCTSRTSTDIRNRQSTLSTSK) the composition is skewed to polar residues.

The sequence is that of TORTIFOLIA1-like protein 2 from Arabidopsis thaliana (Mouse-ear cress).